The following is a 1605-amino-acid chain: Ribosome-binding protein 1 (1605 aa).

The Lumenal portion of the chain corresponds to 1–7 (MDIYDTQ). Residues 8-28 (TLGVVVFGGFMVVSAIGIFLV) traverse the membrane as a helical segment. The Cytoplasmic portion of the chain corresponds to 29-1605 (STFSMKETSY…GSSSKEGTSV (1577 aa)). A disordered region spans residues 44–88 (NQRKEMAKTHHQKGEKKKKEKTVEKKGKTKKKEEKPNGKIPEHDL). Over residues 52-63 (THHQKGEKKKKE) the composition is skewed to basic residues. The segment covering 64–88 (KTVEKKGKTKKKEEKPNGKIPEHDL) has biased composition (basic and acidic residues). A Phosphoserine modification is found at Ser-111. The segment at 114-150 (SSVGHTPIATVPAMPQEKLASSPKDRKKKEKKVAKVE) is disordered. Lys-148 participates in a covalent cross-link: Glycyl lysine isopeptide (Lys-Gly) (interchain with G-Cter in SUMO2). Ser-159 and Ser-165 each carry phosphoserine. The disordered stretch occupies residues 172-849 (ATPKEVPMVA…PGPPDCDGPL (678 aa)). 61 repeat units span residues 196 to 205 (SQGKKGQGAQ), 206 to 215 (NQAKKGEGAQ), 216 to 225 (NQGKKGEGAQ), 226 to 235 (NQAKKGEGAQ), 236 to 245 (NQAKKGEGAQ), 246 to 255 (NQGKKGEGAQ), 256 to 265 (NQAKKGEGGQ), 266 to 275 (NQAKKGEGAQ), 276 to 285 (NQGKKGEGAQ), 286 to 295 (NQGKKGEGAQ), 296 to 305 (NQAKKGEGAQ), 306 to 315 (NQAKKGEGAQ), 316 to 325 (NQGKKGEGAQ), 326 to 335 (NQSKKGEGAQ), 336 to 345 (NQAKKGEGGQ), 346 to 355 (NQAKKGEGAQ), 356 to 365 (NQAKKGEGAQ), 366 to 375 (NQAKKGEGVQ), 376 to 385 (NQAKKGVEGA), 386 to 395 (QNQGKKGEAN), 396 to 405 (QNQAKKGEGG), 406 to 415 (QNQTKKGEGP), 416 to 425 (QNQGKKGEAA), 426 to 435 (QKQDKKIEGA), 436 to 445 (QNQGKKPEGT), 446 to 455 (SNQGKKGEGA), 456 to 465 (QNQGKKGEGA), 466 to 475 (QNQSKKGEGA), 476 to 485 (QNQAKKGEGG), 486 to 495 (QNQAKKGEGA), 496 to 505 (QNQAKKGEGA), 506 to 515 (QNQAKKGEGV), 516 to 525 (QNQAKKGVEG), 527 to 536 (QNQGKKGEAN), 537 to 546 (QNQAKKGEGG), 547 to 556 (QNQTKKGEGP), 557 to 566 (QNQGKKGEAA), 567 to 576 (QKQDKKIEGA), 577 to 586 (QNQGKKPEGT), 587 to 596 (SNQGKKGEGA), 597 to 606 (QNQGKKGEGA), 607 to 616 (QNQGKKGEGA), 617 to 626 (QNQGKKGEGA), 628 to 637 (NQGKKGEGAQ), 638 to 647 (NQGKKGEGAQ), 648 to 657 (NQGKKGEGAQ), 658 to 667 (NQGKKGEGPQ), 668 to 677 (NQAKKGEGAQ), 678 to 687 (NQGKKGEGAQ), 688 to 697 (NQGKKGEGAQ), 698 to 707 (NQGKKAEGVQ), 708 to 717 (SQSKKGEGTQ), 718 to 727 (NQGKKGDGNP), 729 to 738 (QGKKGEGASN), 739 to 748 (QNRKTDTVAN), 749 to 758 (QGTKQEGVSN), 759 to 768 (QVKKSEGSPN), 769 to 778 (QGKKAEGAPN), 779 to 788 (QGKKKDGSPS), 789 to 798 (QAKKVDAAAN), and 799 to 808 (QGKKSEMAPA). Positions 196-808 (SQGKKGQGAQ…QGKKSEMAPA (613 aa)) are 61 X 10 AA tandem repeats of [NSQ]-[NKQVGA]-[GSAQKRT]-[ASGDTK]-[KGTQSAV]-[KGAED]-[EQVGIPTDMA]-[EGVAS]-[AGVPETNS]-[AQNGPTVS]. Residues 197–208 (QGKKGQGAQNQA) are compositionally biased toward low complexity. 4 stretches are compositionally biased toward polar residues: residues 224-258 (AQNQ…QNQA), 274-338 (AQNQ…QNQA), 354-378 (AQNQ…QNQA), and 385-399 (AQNQ…QNQA). Over residues 420-433 (KKGEAAQKQDKKIE) the composition is skewed to basic and acidic residues. 3 stretches are compositionally biased toward polar residues: residues 435–479 (AQNQ…QNQA), 495–519 (AQNQ…QNQA), and 526–540 (AQNQ…QNQA). Residues 561–574 (KKGEAAQKQDKKIE) show a composition bias toward basic and acidic residues. Polar residues-rich tracts occupy residues 576–720 (AQNQ…QNQG) and 736–769 (ASNQ…SPNQ). Phosphoserine is present on Ser-786. Positions 811 to 821 (QKASMVQSQEA) are enriched in polar residues. Ser-818 bears the Phosphoserine mark. Lys-823 is covalently cross-linked (Glycyl lysine isopeptide (Lys-Gly) (interchain with G-Cter in SUMO1)). N6-acetyllysine is present on Lys-1135. Phosphoserine occurs at positions 1162 and 1178. Disordered stretches follow at residues 1460-1481 (MRSH…AEQD) and 1571-1605 (TTQE…GTSV). Residues 1576–1598 (LTKEKDTVKKLQEQLGKAEDGSS) are compositionally biased toward basic and acidic residues.

In terms of tissue distribution, widely expressed.

Its subcellular location is the endoplasmic reticulum membrane. In terms of biological role, acts as a ribosome receptor and mediates interaction between the ribosome and the endoplasmic reticulum membrane. The sequence is that of Ribosome-binding protein 1 (Rrbp1) from Mus musculus (Mouse).